A 194-amino-acid polypeptide reads, in one-letter code: WASH complex subunit 3 (194 aa).

An N-acetylmethionine modification is found at methionine 1. Residues threonine 46 to serine 74 are a coiled coil. The span at threonine 98 to threonine 123 shows a compositional bias: polar residues. 2 disordered regions span residues threonine 98–glutamate 125 and serine 158–aspartate 194.

Belongs to the CCDC53 family. As to quaternary structure, component of the WASH core complex also described as WASH regulatory complex (SHRC) composed of WASHC1, WASHC2, WASHC3, WASHC4 and WASHC5. The WASH core complex associates via WASHC2 with the F-actin-capping protein dimer (formed by CAPZA1, CAPZA2 or CAPZA3 and CAPZB) in a transient or substoichiometric manner which was initially described as WASH complex.

It is found in the early endosome. Acts as a component of the WASH core complex that functions as a nucleation-promoting factor (NPF) at the surface of endosomes, where it recruits and activates the Arp2/3 complex to induce actin polymerization, playing a key role in the fission of tubules that serve as transport intermediates during endosome sorting. This chain is WASH complex subunit 3, found in Bos taurus (Bovine).